A 351-amino-acid polypeptide reads, in one-letter code: DNA beta-glucosyltransferase (351 aa).

In terms of assembly, monomer.

The catalysed reaction is Transfers a beta-D-glucosyl residue from UDP-alpha-D-glucose to a hydroxymethylcytosine residue in DNA.. The protein operates within genetic information processing; DNA modification. In terms of biological role, catalyzes the transfer of glucose from uridine diphosphoglucose to 5-hydroxymethyl cytosine of T4 DNA to yield glucosyl 5-hydroxymethyl cytosine (glc-HMC). This DNA process seems to occur immediately after DNA synthesis since the DNA alpha-glucosyltransferase interacts with the clamp protein gp45. The glc-HMC modification protects the phage genome against its own nucleases and the host restriction endonuclease system. The glc-HMC modification also protects against the host CRISPR-Cas9 defense system. This Enterobacteria phage T4 (Bacteriophage T4) protein is DNA beta-glucosyltransferase (bgt).